The sequence spans 507 residues: Pyridoxine 4-oxidase (507 aa).

Histidine 448 functions as the Proton acceptor in the catalytic mechanism.

This sequence belongs to the GMC oxidoreductase family. As to quaternary structure, monomer. The cofactor is FAD.

The enzyme catalyses pyridoxine + O2 = pyridoxal + H2O2. Its pathway is cofactor degradation; B6 vitamer degradation; pyridoxal from pyridoxine (oxidase route): step 1/1. The sequence is that of Pyridoxine 4-oxidase (pno) from Microbacterium luteolum (Aureobacterium luteolum).